We begin with the raw amino-acid sequence, 123 residues long: NADH-quinone oxidoreductase subunit A (123 aa).

The next 3 membrane-spanning stretches (helical) occupy residues 11–31 (YLPIAIFFGIALLVSGLIMIL), 68–88 (LVAILFIIFDLEIAFLVPWAI), and 93–113 (IGKIGFFSMIFFLFVLTIGFI).

The protein belongs to the complex I subunit 3 family. In terms of assembly, NDH-1 is composed of 14 different subunits. Subunits NuoA, H, J, K, L, M, N constitute the membrane sector of the complex.

Its subcellular location is the cell inner membrane. It carries out the reaction a quinone + NADH + 5 H(+)(in) = a quinol + NAD(+) + 4 H(+)(out). Its function is as follows. NDH-1 shuttles electrons from NADH, via FMN and iron-sulfur (Fe-S) centers, to quinones in the respiratory chain. The immediate electron acceptor for the enzyme in this species is believed to be ubiquinone. Couples the redox reaction to proton translocation (for every two electrons transferred, four hydrogen ions are translocated across the cytoplasmic membrane), and thus conserves the redox energy in a proton gradient. The chain is NADH-quinone oxidoreductase subunit A from Rickettsia felis (strain ATCC VR-1525 / URRWXCal2) (Rickettsia azadi).